We begin with the raw amino-acid sequence, 290 residues long: 7-methylguanosine phosphate-specific 5'-nucleotidase A (290 aa).

Aspartate 39 (nucleophile) is an active-site residue. Mg(2+) is bound by residues aspartate 39 and aspartate 41. Aspartate 41 functions as the Proton donor in the catalytic mechanism. A CMP-binding site is contributed by glutamate 86. A N(7)-methyl-GMP-binding site is contributed by glutamate 86. Substrate contacts are provided by residues 154–155 and lysine 203; that span reads SA. Mg(2+) is bound at residue aspartate 228.

It belongs to the pyrimidine 5'-nucleotidase family. As to quaternary structure, monomer.

The protein resides in the cytoplasm. It catalyses the reaction N(7)-methyl-GMP + H2O = N(7)-methylguanosine + phosphate. The catalysed reaction is CMP + H2O = cytidine + phosphate. It carries out the reaction a ribonucleoside 5'-phosphate + H2O = a ribonucleoside + phosphate. Functionally, specifically hydrolyzes 7-methylguanosine monophosphate (m(7)GMP) to 7-methylguanosine and inorganic phosphate. The specific activity for m(7)GMP may protect cells against undesired salvage of m(7)GMP and its incorporation into nucleic acids. Also has weak activity for CMP. UMP and purine nucleotides are poor substrates. This chain is 7-methylguanosine phosphate-specific 5'-nucleotidase A (Nt5c3b-a), found in Xenopus laevis (African clawed frog).